A 457-amino-acid polypeptide reads, in one-letter code: Multidrug resistance protein MdtK (457 aa).

The next 12 helical transmembrane spans lie at 11 to 31, 46 to 66, 93 to 113, 127 to 147, 160 to 180, 188 to 208, 243 to 263, 283 to 301, 316 to 336, 357 to 377, 387 to 407, and 418 to 438; these read LLAL…MGVV, AVAV…GLLL, WLAL…DHVI, AVGF…FQVL, GMVI…IFIY, LGGV…FLMM, LPVA…ALLV, LMFM…RVGF, YTSM…TIVF, LMLL…GSGV, IFFI…YLLG, and PAGF…LMVL.

It belongs to the multi antimicrobial extrusion (MATE) (TC 2.A.66.1) family. MdtK subfamily.

It localises to the cell inner membrane. Functionally, multidrug efflux pump that functions probably as a Na(+)/drug antiporter. The sequence is that of Multidrug resistance protein MdtK from Yersinia pseudotuberculosis serotype O:1b (strain IP 31758).